The chain runs to 138 residues: Protein FAM136A (138 aa).

An N-acetylalanine modification is found at Ala-2. Thr-124 and Thr-126 each carry phosphothreonine.

The protein belongs to the FAM136 family.

The chain is Protein FAM136A (Fam136a) from Rattus norvegicus (Rat).